We begin with the raw amino-acid sequence, 178 residues long: Epididymal-specific lipocalin-9 (178 aa).

The N-terminal stretch at Met-1–Ala-16 is a signal peptide. N-linked (GlcNAc...) asparagine glycosylation is found at Asn-46, Asn-68, and Asn-129. A disulfide bridge connects residues Cys-83 and Cys-176.

Belongs to the calycin superfamily. Lipocalin family. As to expression, expressed in epididymis. Not detected in all other tissues tested.

The protein localises to the secreted. The polypeptide is Epididymal-specific lipocalin-9 (Lcn9) (Mus musculus (Mouse)).